The primary structure comprises 704 residues: Elongation factor G (704 aa).

The 283-residue stretch at 8–290 (ARYRNIGISA…AVIDYLPSPV (283 aa)) folds into the tr-type G domain. GTP contacts are provided by residues 17–24 (AHIDAGKT), 88–92 (DTPGH), and 142–145 (NKMD). Residues K504 and K643 each carry the N6-acetyllysine modification.

It belongs to the TRAFAC class translation factor GTPase superfamily. Classic translation factor GTPase family. EF-G/EF-2 subfamily.

It localises to the cytoplasm. In terms of biological role, catalyzes the GTP-dependent ribosomal translocation step during translation elongation. During this step, the ribosome changes from the pre-translocational (PRE) to the post-translocational (POST) state as the newly formed A-site-bound peptidyl-tRNA and P-site-bound deacylated tRNA move to the P and E sites, respectively. Catalyzes the coordinated movement of the two tRNA molecules, the mRNA and conformational changes in the ribosome. The protein is Elongation factor G of Escherichia coli O17:K52:H18 (strain UMN026 / ExPEC).